Consider the following 386-residue polypeptide: Inactive GDSL esterase/lipase-like protein 23 (386 aa).

The first 29 residues, 1 to 29 (MMAKNCNLVSVLCVFLVLTLFNKPITVAG), serve as a signal peptide directing secretion. Ser43 acts as the Nucleophile in catalysis. N-linked (GlcNAc...) asparagine glycosylation is found at Asn105, Asn165, and Asn288. Catalysis depends on residues Asp322 and His325.

This sequence belongs to the 'GDSL' lipolytic enzyme family. Part of the PYK10 complex. Interacts with MVP1. In terms of tissue distribution, expressed mainly in roots.

Its subcellular location is the endoplasmic reticulum. Involved in the control of the PYK10 complex size and possibly substrate specificity. May be exported from the endoplasmic reticulum upon interaction with MVP1. This chain is Inactive GDSL esterase/lipase-like protein 23 (GLL23), found in Arabidopsis thaliana (Mouse-ear cress).